A 157-amino-acid polypeptide reads, in one-letter code: Large ribosomal subunit protein bL17 (157 aa).

The interval 124–157 is disordered; that stretch reads AAPVVSKQDRAKRVKGSKKAESRSQENEGGDAAE.

Belongs to the bacterial ribosomal protein bL17 family. Part of the 50S ribosomal subunit. Contacts protein L32.

This chain is Large ribosomal subunit protein bL17, found in Chlorobaculum tepidum (strain ATCC 49652 / DSM 12025 / NBRC 103806 / TLS) (Chlorobium tepidum).